An 85-amino-acid polypeptide reads, in one-letter code: Keratin-associated protein 7-1 (85 aa).

Residues 37–82 (GSPLGYGCNGYSSLGYGFGGSSFSNLGCGYGGSFYRPWGSGSGFGY) are 12 X 2 AA repeats of G-[YCGS].

The protein belongs to the KRTAP type 7 family. Interacts with wool keratins. As to expression, wool.

In terms of biological role, in the wool cortex, wool keratin intermediate filaments are embedded in an interfilamentous matrix, consisting of hair keratin-associated proteins (KRTAP), which are essential for the formation of a rigid and resistant wool shaft through their extensive disulfide bond cross-linking with abundant cysteine residues of wool keratins. The matrix proteins include the high-sulfur and high-glycine-tyrosine keratins. This is Keratin-associated protein 7-1 (KRTAP7-1) from Ovis aries (Sheep).